The following is a 162-amino-acid chain: COP9 signalosome complex subunit 9 (162 aa).

The PCI domain occupies glutamate 6–arginine 118.

As to quaternary structure, component of a COP9 signalosome-like (CSN) complex, composed of at least RRI1/CSN5, CSN9, RRI2/CSN10, PCI8/CSN11, CSN12 and CSI1. In the complex, it probably interacts directly with CSN12 and CSI1. Also interacts with RPN5.

The protein localises to the cytoplasm. It localises to the nucleus. Its function is as follows. Component of the COP9 signalosome (CSN) complex that acts as a regulator of the ubiquitin (Ubl) conjugation pathway by mediating the deneddylation of the cullin subunit of SCF-type E3 ubiquitin-protein ligase complexes. The CSN complex is involved in the regulation of the mating pheromone response. The protein is COP9 signalosome complex subunit 9 (CSN9) of Saccharomyces cerevisiae (strain ATCC 204508 / S288c) (Baker's yeast).